A 344-amino-acid polypeptide reads, in one-letter code: tRNA(Ile)-lysidine synthase (344 aa).

43 to 48 (SGGADS) contacts ATP.

Belongs to the tRNA(Ile)-lysidine synthase family.

It is found in the cytoplasm. The enzyme catalyses cytidine(34) in tRNA(Ile2) + L-lysine + ATP = lysidine(34) in tRNA(Ile2) + AMP + diphosphate + H(+). Ligates lysine onto the cytidine present at position 34 of the AUA codon-specific tRNA(Ile) that contains the anticodon CAU, in an ATP-dependent manner. Cytidine is converted to lysidine, thus changing the amino acid specificity of the tRNA from methionine to isoleucine. This Bordetella bronchiseptica (strain ATCC BAA-588 / NCTC 13252 / RB50) (Alcaligenes bronchisepticus) protein is tRNA(Ile)-lysidine synthase.